The primary structure comprises 124 residues: Small ribosomal subunit protein eS6 (124 aa).

Belongs to the eukaryotic ribosomal protein eS6 family.

This Methanococcus maripaludis (strain DSM 14266 / JCM 13030 / NBRC 101832 / S2 / LL) protein is Small ribosomal subunit protein eS6.